We begin with the raw amino-acid sequence, 123 residues long: Protein TraJ (123 aa).

As to quaternary structure, monomer.

The protein resides in the cytoplasm. In terms of biological role, transfer of plasmid RP4 during bacterial conjugation requires the plasmid-encoded TraJ protein, which binds to a 19-base pair invert sequence repetition within the transfer origin. TraJ protein is bound to only one side of the DNA helix. This nucleoprotein structure is the initial complex in the pathway to assemble a functional relaxosome. The protein is Protein TraJ (traJ) of Escherichia coli.